The primary structure comprises 498 residues: Glycerol kinase (498 aa).

Threonine 12 contacts ADP. Residues threonine 12, threonine 13, and serine 14 each contribute to the ATP site. Threonine 12 is a sn-glycerol 3-phosphate binding site. Arginine 16 contacts ADP. Positions 82, 83, 135, and 245 each coordinate sn-glycerol 3-phosphate. The glycerol site is built by arginine 82, glutamate 83, tyrosine 135, aspartate 245, and glutamine 246. ADP is bound by residues threonine 267 and glycine 310. Residues threonine 267, glycine 310, glutamine 314, and glycine 411 each coordinate ATP. ADP contacts are provided by glycine 411 and asparagine 415.

This sequence belongs to the FGGY kinase family. In terms of assembly, homotetramer and homodimer (in equilibrium).

The catalysed reaction is glycerol + ATP = sn-glycerol 3-phosphate + ADP + H(+). Its pathway is polyol metabolism; glycerol degradation via glycerol kinase pathway; sn-glycerol 3-phosphate from glycerol: step 1/1. Its activity is regulated as follows. Activated by phosphorylation and inhibited by fructose 1,6-bisphosphate (FBP). Key enzyme in the regulation of glycerol uptake and metabolism. Catalyzes the phosphorylation of glycerol to yield sn-glycerol 3-phosphate. In Clostridium botulinum (strain Eklund 17B / Type B), this protein is Glycerol kinase.